Here is a 236-residue protein sequence, read N- to C-terminus: Sugar fermentation stimulation protein homolog (236 aa).

The protein belongs to the SfsA family.

The protein is Sugar fermentation stimulation protein homolog of Desulfotalea psychrophila (strain LSv54 / DSM 12343).